The sequence spans 2196 residues: MSLNEIAHDQPVENGPLYSEKQDHTAVDYALHILFTQFVRLSEQKISFLSRYHANEGKNAEPVRFNVGEQEAILLLKKGEDNEFDRCIQALVALASSKPVAVIESLLCWRKVRVDITSSSGTPRVVNERRSSISIYILCRVLTEIAETIPSNALEESTVSCLLECVFHQLLSAKNLPVSSSYFSLANWESFAFLVGSMSRFNFVMVSDRFIEEIEHLEKSGCDSRQKETVLVHLLRAMRYLRLQLYPTTLLEESIAFLQSLTSFFMKANTALKIEYAYLMEQLLRPLISRATFEVNIPAWSRTIETIYPVVLKMCTKTKYWNVFFPFCCTLLCLSPKQFFLKHWISSLDAAFFRVKDRRLRNTGLPHLSRVVWTYSNQYKEEPSIMNSNISNILKSGFSIGKKFSVVPFATLEELDGYAQIVRVVGAHFPELVIKEILTPLSTDAFTENIGPEKLMIVVRSVYYILHDMKYKKSDSTIFEYIEFEFVDLHEVAVGTPLQQFVHNLSQKLLFLVFQLSTNTNCYLDSKNATSLLALYINALKVFPCLMGKLEQRVIDAYVKCLNCSNKIIHTVCHNSLIYFSSGLKMSKSVISCLSRKLVKGSEYLLRTYHEVIRIWISQQEAVIEKRNSVLSNKSCASSESNTPASVKQDYDDIQSWTIIEEIQSLGVLHLSSPSVGIRKFAVALLNDVKQLNTEYLMLSSDKVEVGDIYSEPTIVDVLKDCDSSILSVESHLPTAAERSRLRKFINDGTKDMLLKLATSNSGVDISIWYNVFPRFIKVCFERFPTTMALLRNTVCEKLPSITMQLLSRIESSELNFNLKSAVKNDNFPEFLLVQWKLYLIVACCTITYTSNVDYSHTDLRRTLTAVQSGNHLRGLQETIKITSAESLFSMVLPLIFTEFSPIREAVVFAIGCINVNAFPQLVRSLKPYISVLKQDHQEFIFAGLNFPSVKRRNKPDLLLRSEIAHIFAMTSHLLLHELLNEDREALSVISEFLKDLKGFLSTPNVQADEKYLKLRCYFSQLLEKVLLVQNLHPSSEVLPFSGRASCWKLLDEWTGFGPARAITKNREELMRAHIRGNNKDIRERDKLLASFEAGKQNLEYLAIKAMIALCTAKLQQELTEGVFLFDIEILLNWFTAVFGSPSKAIVGLARKGLTALLLENSSNEVLLQKVINRCFSKEISQTISNYYFLSLSEMLIQINPNNLSKPKLLPLCLVNLSTNNLSVRLKAFELLGNFHLNNFTMTALMEFKTFLESSNPALYLKPQYLFSVQLASDFTEDSFTLTSECLRYFNYGHQHRRGLVTVLLPWLQNLELKMDVENKTFDSFTAVILIDLIEVTAKFTNDLPNEIEALWTSLALSRHKSNWTVILFFLMQQCYQRKTFSFVDCTRQITIYLAKTELLSDLYSTLLSFVCPANVSNENQEVYKFSLEDLSSTYVANLEDLFPSEKNHISYSPCQLSLLLLMDILPNPSIITVTDDVATILHAAFIQFDHYSRIVQEQCQQIFQYVVRKVLAMEGRLDYDDAYFDFNVESSLITGLRGKTKKEDDLVKYHNMILKTIELLSSSYPELKQIWGEVALSWATTCPSRRLACNSFQLFRSLLPDFDARMLLEIISRLVGTISDETSYLRDYSVEILRTFNSYVLVMNSDDLLSYSQILWTAIACLTTIHEDEFIESVKIAYAYFLRVEETDSATQQIMETFPQNWVGDYQGLQILILKGFRSTNSFEITMNFFLLLMDFKDNDLVGVGYLRILSCLLVSLPAMVYTYEHSDPITFDLSVFCHKLATLASQFNDDALIELLDTYLKRKFRSIKDFLKHTVSYLYSYYFEDYELEIVSTLTMFLSNNLTWFRKSTLDVLKELFPLIDFQKPIYSEHGLGIVSPLLRLLPTGYAMEALSLLTDSVLHVSAPTDMQTLKLLMVDPKLKNSDDRLAGFFEIPDEDGWYEPNSEYAAAITKSNVHAVFYSCSTTEASVSTPEVRFHADEVSNYPRHVPTDSHGSLDENSLGELVTTLHSLDVFFAEDRDEELIQPDVAVDPKLDITSEDYDDRIATILSGSLRRQKQGLMAYETESFRDYSPNEEIDASAKLPMDMPPVRVRKSSFISKLKPHYFMDAESYYPSLKALGNSAEHRLSLDEIRGAAELKQNKNWNSMLDQSVSMINEDSVEDHETHENYYHLRTMFQGSESNESFTDTTRSRGWH.

To yeast TAO3/PAG1.

Its subcellular location is the cytoplasm. It localises to the membrane. Required for the maintenance of cell polarity. Has a role in localizing F-actin at the cell tips. The protein is Cell polarity protein mor2 (mor2) of Schizosaccharomyces pombe (strain 972 / ATCC 24843) (Fission yeast).